The following is a 76-amino-acid chain: uncharacterized protein (76 aa).

The next 2 membrane-spanning stretches (helical) occupy residues 9-29 (AIGIVVHLIFIAVTWWALQAV) and 45-65 (LLMILLTIAIGTAVANFFLDY).

It localises to the cell membrane. This is an uncharacterized protein from Bacillus subtilis (strain 168).